A 113-amino-acid chain; its full sequence is uncharacterized protein (113 aa).

It to H.influenzae HI_1053 and P.denitrificans COX locus Uncharacterized protein 4.

This is an uncharacterized protein from Cupriavidus necator (strain ATCC 17699 / DSM 428 / KCTC 22496 / NCIMB 10442 / H16 / Stanier 337) (Ralstonia eutropha).